Here is a 592-residue protein sequence, read N- to C-terminus: Thiol:disulfide interchange protein DsbD (592 aa).

Positions 1-19 (MKLIASFSIFMLMSIWSFA) are cleaved as a signal peptide. Intrachain disulfides connect C130/C136 and C204/C326. Transmembrane regions (helical) follow at residues 186–206 (IWVL…PCVF), 229–249 (FVLS…LGLV), 265–285 (IILG…FGAW), 318–338 (ISGL…LLYI), 345–365 (LLGF…LILF), 379–399 (WMNI…LMFV), 406–426 (MATD…FYVM), and 440–460 (ALVI…TIFG). The 150-residue stretch at 443–592 (IFIGLFASAM…AFAAHAKNIL (150 aa)) folds into the Thioredoxin domain. The cysteines at positions 508 and 511 are disulfide-linked.

It belongs to the thioredoxin family. DsbD subfamily.

It localises to the cell inner membrane. It catalyses the reaction [protein]-dithiol + NAD(+) = [protein]-disulfide + NADH + H(+). It carries out the reaction [protein]-dithiol + NADP(+) = [protein]-disulfide + NADPH + H(+). Functionally, required to facilitate the formation of correct disulfide bonds in some periplasmic proteins and for the assembly of the periplasmic c-type cytochromes. Acts by transferring electrons from cytoplasmic thioredoxin to the periplasm. This transfer involves a cascade of disulfide bond formation and reduction steps. This is Thiol:disulfide interchange protein DsbD from Pseudoalteromonas atlantica (strain T6c / ATCC BAA-1087).